A 61-amino-acid chain; its full sequence is Tryptophyllin-1 (61 aa).

A signal peptide spans 1 to 22 (MDILKKSLFLALFLGLVSISFC). The propeptide occupies 23 to 53 (DEEKRQDDDESNESEEKKEIHEEGSQEERRE). The segment at 24-61 (EEKRQDDDESNESEEKKEIHEEGSQEERREKPPPWVPV) is disordered. A compositionally biased stretch (basic and acidic residues) spans 36–55 (SEEKKEIHEEGSQEERREKP).

In terms of tissue distribution, expressed by the skin glands.

It is found in the secreted. Functionally, the synthetic peptide inhibits bradykinin-induced relaxation of rat tail artery smooth muscle, and also has anti-proliferative effects on the human prostate cancer cell lines LNCaP, PC3 and DU145. This Phyllomedusa sauvagei (Sauvage's leaf frog) protein is Tryptophyllin-1.